The sequence spans 441 residues: Proline--tRNA ligase (441 aa).

This sequence belongs to the class-II aminoacyl-tRNA synthetase family. ProS type 2 subfamily. Homodimer.

It is found in the cytoplasm. It catalyses the reaction tRNA(Pro) + L-proline + ATP = L-prolyl-tRNA(Pro) + AMP + diphosphate. Catalyzes the attachment of proline to tRNA(Pro) in a two-step reaction: proline is first activated by ATP to form Pro-AMP and then transferred to the acceptor end of tRNA(Pro). The protein is Proline--tRNA ligase of Bartonella bacilliformis (strain ATCC 35685 / KC583 / Herrer 020/F12,63).